We begin with the raw amino-acid sequence, 569 residues long: Glucose-6-phosphate isomerase, cytosolic 2 (569 aa).

E360 acts as the Proton donor in catalysis. Catalysis depends on residues H391 and K516.

It belongs to the GPI family. Homodimer.

The protein resides in the cytoplasm. It catalyses the reaction alpha-D-glucose 6-phosphate = beta-D-fructose 6-phosphate. It participates in carbohydrate degradation; glycolysis; D-glyceraldehyde 3-phosphate and glycerone phosphate from D-glucose: step 2/4. In Clarkia concinna (Red ribbons), this protein is Glucose-6-phosphate isomerase, cytosolic 2 (PGIC2).